The chain runs to 118 residues: HTH-type transcriptional regulator SarT (118 aa).

The segment at residues 55–78 (MRDIISYIGIDQSRIVKSVKDLSK) is a DNA-binding region (H-T-H motif).

Belongs to the SarA family.

It localises to the cytoplasm. In terms of biological role, transcriptional regulator acting as an intermediary between major regulators sarA and agr and virulence genes. Represses alpha-hemolysin (hla) gene expression. Down-regulates agr RNAIII expression by repressing sarU, a positive activator of agr expression. Up-regulates sarS, which induces the expression of the cell wall-associated protein A (spa). This chain is HTH-type transcriptional regulator SarT (sarT), found in Staphylococcus aureus (strain NCTC 8325 / PS 47).